The sequence spans 54 residues: Ferredoxin (54 aa).

2 4Fe-4S ferredoxin-type domains span residues Tyr2–Gly25 and Ser26–Asp54. [4Fe-4S] cluster contacts are provided by Cys8, Cys11, Cys14, Cys18, Cys35, Cys38, Cys41, and Cys45.

It depends on [4Fe-4S] cluster as a cofactor.

Its function is as follows. Ferredoxins are iron-sulfur proteins that transfer electrons in a wide variety of metabolic reactions. The sequence is that of Ferredoxin from Peptoniphilus asaccharolyticus (Peptostreptococcus asaccharolyticus).